A 127-amino-acid chain; its full sequence is Large ribosomal subunit protein bL12 (127 aa).

Belongs to the bacterial ribosomal protein bL12 family. Homodimer. Part of the ribosomal stalk of the 50S ribosomal subunit. Forms a multimeric L10(L12)X complex, where L10 forms an elongated spine to which 2 to 4 L12 dimers bind in a sequential fashion. Binds GTP-bound translation factors.

Its function is as follows. Forms part of the ribosomal stalk which helps the ribosome interact with GTP-bound translation factors. Is thus essential for accurate translation. The sequence is that of Large ribosomal subunit protein bL12 from Caulobacter vibrioides (strain ATCC 19089 / CIP 103742 / CB 15) (Caulobacter crescentus).